A 79-amino-acid polypeptide reads, in one-letter code: Hemoglobin subunit zeta (79 aa).

An N-acetylserine modification is found at S1. Residues 1 to 79 (SLTKTXXTII…FKLLSHXFLV (79 aa)) enclose the Globin domain. 2 positions are modified to phosphoserine: S38 and S53. Position 59 (H59) interacts with heme b.

The protein belongs to the globin family. Heterotetramer of two zeta chains and two epsilon chains.

Functionally, the zeta chain is an alpha-type chain of mammalian embryonic hemoglobin. The chain is Hemoglobin subunit zeta from Notamacropus eugenii (Tammar wallaby).